An 89-amino-acid chain; its full sequence is Small ribosomal subunit protein uS15 (89 aa).

This sequence belongs to the universal ribosomal protein uS15 family. As to quaternary structure, part of the 30S ribosomal subunit. Forms a bridge to the 50S subunit in the 70S ribosome, contacting the 23S rRNA.

In terms of biological role, one of the primary rRNA binding proteins, it binds directly to 16S rRNA where it helps nucleate assembly of the platform of the 30S subunit by binding and bridging several RNA helices of the 16S rRNA. Functionally, forms an intersubunit bridge (bridge B4) with the 23S rRNA of the 50S subunit in the ribosome. The chain is Small ribosomal subunit protein uS15 from Aliivibrio fischeri (strain ATCC 700601 / ES114) (Vibrio fischeri).